Consider the following 447-residue polypeptide: Citrate synthase-like protein oryE (447 aa).

Residues His331 and Asp387 contribute to the active site.

This sequence belongs to the citrate synthase family.

It participates in secondary metabolite biosynthesis. Its function is as follows. Citrate synthase-like protein; part of the gene cluster that mediates the biosynthesis of oryzines, natural products with an unusual maleidride backbone. The two subunits of the fungal fatty acid synthase oryfasA and oryfasB probably form octenoic acid. This fatty acid is most likely activated by the acyl-CoA ligase oryP to give octenyl-CoA before the citrate synthase-like protein oryE catalyzes condensation with oxaloacetate to form tricarboxylic acid. The next steps of the pathways are conjectural, but a favorite possible route has been proposed, beginning with decarboxylation and concomitant dehydration by the decarboxylase oryM, followed by tautomerization, which may lead to the production of a diene intermediate. Reduction of this diene intermediate could give the known metabolite piliformic acid. On the pathway to oryzine B and oryzine A, however, hydroxylation of the diene by the alpha-ketoglutarate-dependent dioxygenase oryG and lactonisation by the lactonohydrolases oryH or oryL could give oryzine B directly. Finally, enoyl reduction by the dehydrogenase oryD would then convert oryzine B into oryzine A. This is Citrate synthase-like protein oryE from Aspergillus oryzae (strain ATCC 42149 / RIB 40) (Yellow koji mold).